The chain runs to 799 residues: Elongation factor G, mitochondrial (799 aa).

Residues 1-24 constitute a mitochondrion transit peptide; that stretch reads MRCPSLARLPHRAVSGLTRTPVRF. Residues 97-384 enclose the tr-type G domain; sequence SRVRNIGIAA…GVIDYLPNPS (288 aa). Residues 106–113, 182–186, and 236–239 each bind GTP; these read AHIDSGKT, DTPGH, and NKMD.

The protein belongs to the TRAFAC class translation factor GTPase superfamily. Classic translation factor GTPase family. EF-G/EF-2 subfamily.

It localises to the mitochondrion. Its pathway is protein biosynthesis; polypeptide chain elongation. Its function is as follows. Mitochondrial GTPase that catalyzes the GTP-dependent ribosomal translocation step during translation elongation. During this step, the ribosome changes from the pre-translocational (PRE) to the post-translocational (POST) state as the newly formed A-site-bound peptidyl-tRNA and P-site-bound deacylated tRNA move to the P and E sites, respectively. Catalyzes the coordinated movement of the two tRNA molecules, the mRNA and conformational changes in the ribosome. In Emericella nidulans (strain FGSC A4 / ATCC 38163 / CBS 112.46 / NRRL 194 / M139) (Aspergillus nidulans), this protein is Elongation factor G, mitochondrial (mef1).